The primary structure comprises 123 residues: Protein Wnt-3b (123 aa).

S1 is lipidated: O-palmitoleoyl serine; by PORCN. C89 and C104 are disulfide-bonded. N90 carries an N-linked (GlcNAc...) asparagine glycan.

Belongs to the Wnt family. In terms of processing, palmitoleoylation is required for efficient binding to frizzled receptors. Depalmitoleoylation leads to Wnt signaling pathway inhibition.

The protein resides in the secreted. Its subcellular location is the extracellular space. It is found in the extracellular matrix. Functionally, ligand for members of the frizzled family of seven transmembrane receptors. Probable developmental protein. May be a signaling molecule which affects the development of discrete regions of tissues. Is likely to signal over only few cell diameters. The polypeptide is Protein Wnt-3b (WNT-3B) (Alopias vulpinus (Common thresher shark)).